Reading from the N-terminus, the 51-residue chain is uncharacterized protein (51 aa).

A disordered region spans residues 1–28; the sequence is MQQPQNITTSSISNNNNNNTSLTLQQQQ. A coiled-coil region spans residues 13–47; the sequence is SNNNNNNTSLTLQQQQEQLQQLQIKRKRNLMKQLQ.

This is an uncharacterized protein from Dictyostelium discoideum (Social amoeba).